Reading from the N-terminus, the 524-residue chain is M-phase inducer phosphatase 1 (524 aa).

Residues 74–84 carry the Phosphodegron motif; it reads MGSSESTDSGF. Position 76 is a phosphoserine; by CHEK1 (S76). S79, S82, and S88 each carry phosphoserine; by NEK11. S107 carries the phosphoserine modification. The residue at position 124 (S124) is a Phosphoserine; by CHEK1 and CHEK2. The short motif at 141-143 is the KEN box element; sequence KEN. S178 carries the post-translational modification Phosphoserine; by CHEK1. Residues 264–317 are disordered; the sequence is LCSSSTRSVLKRPERSQEESPPGSTKRRKSMSGASPKESTNPEKAHETLHQSLS. Residues S279 and S293 each carry the phosphoserine; by CHEK1 and CHEK2 modification. Positions 303–312 are enriched in basic and acidic residues; that stretch reads TNPEKAHETL. A Phosphoserine modification is found at S321. The Rhodanese domain maps to 376-482; it reads LIKEFVIIDC…FFMKCQSYCE (107 aa). The active site involves C431. T507 bears the Phosphothreonine; by CHEK1 mark. S513 and S519 each carry phosphoserine; by PLK3.

Belongs to the MPI phosphatase family. As to quaternary structure, interacts with CCNB1/cyclin B1. Interacts with YWHAE/14-3-3 epsilon when phosphorylated. Interacts with CUL1 specifically when CUL1 is neddylated and active. Interacts with BTRC/BTRCP1 and FBXW11/BTRCP2. Interactions with CUL1, BTRC and FBXW11 are enhanced upon DNA damage. Interacts with CHEK2; mediates CDC25A phosphorylation and degradation in response to infrared-induced DNA damages. Interacts with HSP90AB1; prevents heat shock-mediated CDC25A degradation and contributes to cell cycle progression. Post-translationally, phosphorylated by CHEK1 on Ser-76, Ser-124, Ser-178, Ser-279, Ser-293 and Thr-507 during checkpoint mediated cell cycle arrest. Also phosphorylated by CHEK2 on Ser-124, Ser-279, and Ser-293 during checkpoint mediated cell cycle arrest. Phosphorylation on Ser-178 and Thr-507 creates binding sites for YWHAE/14-3-3 epsilon which inhibits CDC25A. Phosphorylation on Ser-76, Ser-124, Ser-178, Ser-279 and Ser-293 may also promote ubiquitin-dependent proteolysis of CDC25A by the SCF complex. Phosphorylation of CDC25A at Ser-76 by CHEK1 primes it for subsequent phosphorylation at Ser-79, Ser-82 and Ser-88 by NEK11. Phosphorylation by NEK11 is required for BTRC-mediated polyubiquitination and degradation. Phosphorylation by PIM1 leads to an increase in phosphatase activity. Phosphorylated by PLK3 following DNA damage, leading to promote its ubiquitination and degradation. Ubiquitinated by the anaphase promoting complex/cyclosome (APC/C) ubiquitin ligase complex that contains FZR1/CDH1 during G1 phase leading to its degradation by the proteasome. Ubiquitinated by a SCF complex containing BTRC and FBXW11 during S phase leading to its degradation by the proteasome. Deubiquitination by USP17L2/DUB3 leads to its stabilization.

It carries out the reaction O-phospho-L-tyrosyl-[protein] + H2O = L-tyrosyl-[protein] + phosphate. Stimulated by B-type cyclins. Stimulated by PIM1-mediated phosphorylation. Tyrosine protein phosphatase which functions as a dosage-dependent inducer of mitotic progression. Directly dephosphorylates CDK1 and stimulates its kinase activity. Also dephosphorylates CDK2 in complex with cyclin-E, in vitro. This chain is M-phase inducer phosphatase 1 (CDC25A), found in Homo sapiens (Human).